Reading from the N-terminus, the 387-residue chain is 3-ketoacyl-CoA thiolase (387 aa).

Cysteine 91 acts as the Acyl-thioester intermediate in catalysis. Active-site proton acceptor residues include histidine 343 and cysteine 373.

This sequence belongs to the thiolase-like superfamily. Thiolase family. Heterotetramer of two alpha chains (FadB) and two beta chains (FadA).

It localises to the cytoplasm. The enzyme catalyses an acyl-CoA + acetyl-CoA = a 3-oxoacyl-CoA + CoA. The protein operates within lipid metabolism; fatty acid beta-oxidation. Its function is as follows. Catalyzes the final step of fatty acid oxidation in which acetyl-CoA is released and the CoA ester of a fatty acid two carbons shorter is formed. The sequence is that of 3-ketoacyl-CoA thiolase from Yersinia pseudotuberculosis serotype O:1b (strain IP 31758).